An 886-amino-acid chain; its full sequence is Alanine--tRNA ligase (886 aa).

Zn(2+)-binding residues include His564, His568, Cys676, and His680.

It belongs to the class-II aminoacyl-tRNA synthetase family. The cofactor is Zn(2+).

The protein localises to the cytoplasm. It carries out the reaction tRNA(Ala) + L-alanine + ATP = L-alanyl-tRNA(Ala) + AMP + diphosphate. In terms of biological role, catalyzes the attachment of alanine to tRNA(Ala) in a two-step reaction: alanine is first activated by ATP to form Ala-AMP and then transferred to the acceptor end of tRNA(Ala). Also edits incorrectly charged Ser-tRNA(Ala) and Gly-tRNA(Ala) via its editing domain. In Methylobacterium sp. (strain 4-46), this protein is Alanine--tRNA ligase.